A 131-amino-acid chain; its full sequence is Global transcriptional regulator Spx (131 aa).

Cys-10 and Cys-13 are joined by a disulfide.

It belongs to the ArsC family. Spx subfamily. In terms of assembly, interacts with the C-terminal domain of the alpha subunit of the RNAP.

It is found in the cytoplasm. With respect to regulation, under non-stress conditions, Spx is degraded by ClpXP. Efficient degradation by ClpXP requires the adapter protein SpxH/YjbH. Function, levels and solubility of Spx are affected by SpxH/YjbH aggregation and stress conditions. In terms of biological role, global transcriptional regulator that plays a key role in stress response and exerts either positive or negative regulation of genes. Acts by interacting with the C-terminal domain of the alpha subunit of the RNA polymerase (RNAP). This interaction can enhance binding of RNAP to the promoter region of target genes and stimulate their transcription, or block interaction of RNAP with activator proteins and repress transcription. Its function is as follows. Required for transcription of thioredoxin reductase (trxB). Modulates the expression of icaR, encoding a repressor of the biofilm operon icaADBC. Also controls the transcription of trfA, a gene implicated in cell wall antibiotic resistance, which in turn is required for degradation of MazE antitoxin, the unstable component of the MazEF toxin-antitoxin system, that neutralizes the endoribonuclease activity of MazF toxin. This is Global transcriptional regulator Spx from Staphylococcus aureus (strain NCTC 8325 / PS 47).